The chain runs to 78 residues: UPF0401 protein YubL (78 aa).

It belongs to the UPF0401 family.

The protein is UPF0401 protein YubL (yubL) of Salmonella typhi.